The following is a 516-amino-acid chain: (R)-citramalate synthase CimA (516 aa).

Residues 8-269 (LEILDVTLRD…KTNINEIAIT (262 aa)) form the Pyruvate carboxyltransferase domain. Arg16 (proton donor) is an active-site residue. Pyruvate contacts are provided by residues 16–17 (RD) and Tyr144. Mn(2+) is bound at residue Asp17. Glu146 functions as the Proton acceptor in the catalytic mechanism. Thr179 contacts pyruvate. Residues His207 and His209 each contribute to the Mn(2+) site.

It belongs to the alpha-IPM synthase/homocitrate synthase family. In terms of assembly, homodimer. The cofactor is Mn(2+).

The catalysed reaction is pyruvate + acetyl-CoA + H2O = (3R)-citramalate + CoA + H(+). It participates in amino-acid biosynthesis; L-isoleucine biosynthesis; 2-oxobutanoate from pyruvate: step 1/3. Its activity is regulated as follows. Regulated by the end-product isoleucine via a feedback inhibition. The binding of isoleucine has inhibitory effects on the binding of both pyruvate and acetyl-CoA. May act via conformational change of the dimer interface of the regulatory domain, leading to inhibition of the catalytic reaction. Catalyzes the condensation of pyruvate and acetyl-coenzyme A to form (R)-citramalate. Shows strict substrate specificity for pyruvate. Cannot use alpha-ketoisovalerate, alpha-ketobutyrate, alpha-ketoisocaproate, alpha-ketoglutarate or glyoxylate. The protein is (R)-citramalate synthase CimA of Leptospira interrogans serogroup Icterohaemorrhagiae serovar Lai (strain 56601).